A 397-amino-acid chain; its full sequence is 2,3-bisphosphoglycerate-independent phosphoglycerate mutase (397 aa).

This sequence belongs to the BPG-independent phosphoglycerate mutase family. A-PGAM subfamily.

It catalyses the reaction (2R)-2-phosphoglycerate = (2R)-3-phosphoglycerate. It functions in the pathway carbohydrate degradation; glycolysis; pyruvate from D-glyceraldehyde 3-phosphate: step 3/5. In terms of biological role, catalyzes the interconversion of 2-phosphoglycerate and 3-phosphoglycerate. This is 2,3-bisphosphoglycerate-independent phosphoglycerate mutase (apgM) from Methanosarcina mazei (strain ATCC BAA-159 / DSM 3647 / Goe1 / Go1 / JCM 11833 / OCM 88) (Methanosarcina frisia).